We begin with the raw amino-acid sequence, 431 residues long: Enolase (431 aa).

A (2R)-2-phosphoglycerate-binding site is contributed by Gln163. Catalysis depends on Glu205, which acts as the Proton donor. Residues Asp242, Glu288, and Asp315 each contribute to the Mg(2+) site. The (2R)-2-phosphoglycerate site is built by Lys340, Arg369, Ser370, and Lys391. Lys340 (proton acceptor) is an active-site residue.

This sequence belongs to the enolase family. It depends on Mg(2+) as a cofactor.

It is found in the cytoplasm. Its subcellular location is the secreted. The protein localises to the cell surface. It catalyses the reaction (2R)-2-phosphoglycerate = phosphoenolpyruvate + H2O. It participates in carbohydrate degradation; glycolysis; pyruvate from D-glyceraldehyde 3-phosphate: step 4/5. In terms of biological role, catalyzes the reversible conversion of 2-phosphoglycerate (2-PG) into phosphoenolpyruvate (PEP). It is essential for the degradation of carbohydrates via glycolysis. The protein is Enolase of Trichlorobacter lovleyi (strain ATCC BAA-1151 / DSM 17278 / SZ) (Geobacter lovleyi).